A 389-amino-acid chain; its full sequence is Tryptophan synthase beta chain (389 aa).

At lysine 84 the chain carries N6-(pyridoxal phosphate)lysine.

It belongs to the TrpB family. As to quaternary structure, tetramer of two alpha and two beta chains. The cofactor is pyridoxal 5'-phosphate.

It carries out the reaction (1S,2R)-1-C-(indol-3-yl)glycerol 3-phosphate + L-serine = D-glyceraldehyde 3-phosphate + L-tryptophan + H2O. It participates in amino-acid biosynthesis; L-tryptophan biosynthesis; L-tryptophan from chorismate: step 5/5. The beta subunit is responsible for the synthesis of L-tryptophan from indole and L-serine. This is Tryptophan synthase beta chain from Methanococcus aeolicus (strain ATCC BAA-1280 / DSM 17508 / OCM 812 / Nankai-3).